The following is a 147-amino-acid chain: 3-hydroxyacyl-[acyl-carrier-protein] dehydratase FabZ (147 aa).

Residue His46 is part of the active site.

This sequence belongs to the thioester dehydratase family. FabZ subfamily.

The protein localises to the cytoplasm. It carries out the reaction a (3R)-hydroxyacyl-[ACP] = a (2E)-enoyl-[ACP] + H2O. Involved in unsaturated fatty acids biosynthesis. Catalyzes the dehydration of short chain beta-hydroxyacyl-ACPs and long chain saturated and unsaturated beta-hydroxyacyl-ACPs. The protein is 3-hydroxyacyl-[acyl-carrier-protein] dehydratase FabZ of Syntrophobacter fumaroxidans (strain DSM 10017 / MPOB).